The sequence spans 720 residues: Asp/Glu-specific dipeptidyl-peptidase (720 aa).

Residues 1–21 (MKKRLLLPLFAALCLSQIAHA) form the signal peptide. Cys-69 and Cys-86 are disulfide-bonded. Catalysis depends on charge relay system residues His-85, Asp-227, and Ser-655.

The protein belongs to the peptidase S46 family. As to quaternary structure, homodimer.

It localises to the cell surface. Its activity is regulated as follows. Enzyme activity is completely blocked by diisopropyl-fluorophosphates, moderately by phenylmethylsulfonyl fluoride (PMSF) and 4-(2-methyl)benzenesulfonyl fluoride, and slightly by pepstatin in vitro. In terms of biological role, catalyzes the removal of dipeptides from the N-terminus of oligopeptides. Shows a strict specificity for acidic residues (Asp or Glu) in the P1 position, and has a hydrophobic residue preference at the P2 position. Preferentially cleaves the synthetic substrate Leu-Asp-methylcoumaryl-7-amide (Leu-Asp-MCA) as compared to Leu-Glu-MCA. Is involved in amino acid metabolism and bacterial growth of asaccharolytic P.gingivalis, that utilizes amino acids from extracellular proteinaceous nutrients as energy and carbon sources. In Porphyromonas gingivalis (strain ATCC 33277 / DSM 20709 / CIP 103683 / JCM 12257 / NCTC 11834 / 2561), this protein is Asp/Glu-specific dipeptidyl-peptidase.